The primary structure comprises 318 residues: NADH-ubiquinone oxidoreductase chain 1 (318 aa).

8 consecutive transmembrane segments (helical) span residues 2-22 (FLMN…FLTL), 70-90 (MFIL…IPMP), 100-120 (LGVL…LWSG), 136-156 (VAQT…IMML), 171-191 (HLWL…STLA), 231-251 (IIMM…NPLF), 253-273 (ELFT…FLWV), and 294-314 (LPLT…LAGI).

Belongs to the complex I subunit 1 family.

The protein localises to the mitochondrion inner membrane. It catalyses the reaction a ubiquinone + NADH + 5 H(+)(in) = a ubiquinol + NAD(+) + 4 H(+)(out). Functionally, core subunit of the mitochondrial membrane respiratory chain NADH dehydrogenase (Complex I) that is believed to belong to the minimal assembly required for catalysis. Complex I functions in the transfer of electrons from NADH to the respiratory chain. The immediate electron acceptor for the enzyme is believed to be ubiquinone. This is NADH-ubiquinone oxidoreductase chain 1 (MT-ND1) from Priodontes maximus (Giant armadillo).